The following is a 95-amino-acid chain: Complement inhibitor RaCI5 (95 aa).

Residues 1–21 (MNAVIVLCVTISAVLIHQCYS) form the signal peptide. 3 disulfides stabilise this stretch: Cys-35-Cys-59, Cys-40-Cys-61, and Cys-55-Cys-76.

Belongs to the RaCI family. Expressed in salivary glands.

The protein localises to the secreted. In terms of biological role, complement inhibitor. Prevents complement-mediated C5 activation by binding to C5. Binds C5 at a different binding site than the other tick complement inhibitors OmCI and CirpT1, and the drug eculizumab. The polypeptide is Complement inhibitor RaCI5 (Rhipicephalus appendiculatus (Brown ear tick)).